We begin with the raw amino-acid sequence, 436 residues long: Histidinol dehydrogenase (436 aa).

NAD(+) contacts are provided by Y136, Q198, and N221. Positions 244, 266, and 269 each coordinate substrate. Residues Q266 and H269 each contribute to the Zn(2+) site. Catalysis depends on proton acceptor residues E334 and H335. H335, D368, E422, and H427 together coordinate substrate. D368 is a Zn(2+) binding site. H427 provides a ligand contact to Zn(2+).

Belongs to the histidinol dehydrogenase family. The cofactor is Zn(2+).

The enzyme catalyses L-histidinol + 2 NAD(+) + H2O = L-histidine + 2 NADH + 3 H(+). It functions in the pathway amino-acid biosynthesis; L-histidine biosynthesis; L-histidine from 5-phospho-alpha-D-ribose 1-diphosphate: step 9/9. Catalyzes the sequential NAD-dependent oxidations of L-histidinol to L-histidinaldehyde and then to L-histidine. This Dehalococcoides mccartyi (strain ATCC BAA-2266 / KCTC 15142 / 195) (Dehalococcoides ethenogenes (strain 195)) protein is Histidinol dehydrogenase.